The primary structure comprises 584 residues: Kelch domain-containing protein 4 (584 aa).

Residues 1–10 (MGKKGKKEKK) are compositionally biased toward basic residues. Disordered stretches follow at residues 1-33 (MGKK…RKEE) and 50-69 (KTQV…NASL). Basic and acidic residues predominate over residues 11-24 (GRGAEKTAAKMEKK). 5 Kelch repeats span residues 77–129 (ELIL…VVPQ), 133–187 (QLWV…AWKR), 188–238 (QLIL…LMAV), 243–289 (SIAI…INPS), and 308–361 (QILV…RRGK). Disordered stretches follow at residues 348–381 (KGPK…APEP), 405–433 (SGLG…CPRS), and 482–533 (PKSQ…EQFE). The residue at position 418 (Ser418) is a Phosphoserine. One copy of the Kelch 6 repeat lies at 443–494 (LLYVYGGMFEAGDRQVTLSDLYCLDLHKMEEWKTLVEMDPKSQEWLEESDSE). Residues 487 to 519 (WLEESDSEEDSSSDEESEDGEDKDQEDSAEEGA) show a composition bias toward acidic residues. The segment covering 520–533 (DPQHPEVARGEQFE) has biased composition (basic and acidic residues).

This chain is Kelch domain-containing protein 4 (Klhdc4), found in Mus musculus (Mouse).